Reading from the N-terminus, the 504-residue chain is Deoxyguanosinetriphosphate triphosphohydrolase (504 aa).

One can recognise an HD domain in the interval 66–273 (RLTHSMEVQQ…MEAADDISYC (208 aa)).

The protein belongs to the dGTPase family. Type 1 subfamily. In terms of assembly, homotetramer. Mg(2+) is required as a cofactor.

The catalysed reaction is dGTP + H2O = 2'-deoxyguanosine + triphosphate + H(+). Functionally, dGTPase preferentially hydrolyzes dGTP over the other canonical NTPs. The chain is Deoxyguanosinetriphosphate triphosphohydrolase from Enterobacter sp. (strain 638).